Consider the following 219-residue polypeptide: Ropporin-1-like protein (219 aa).

In terms of domain architecture, RIIa spans 17-54 (PELPDILKQFTKAAIRTQPHDLLQWSAAYFDSLSKGEP).

It belongs to the ropporin family. Component of axonemal radial spoke complexes.

The protein resides in the cell projection. The protein localises to the cilium. It localises to the flagellum. Functionally, functions as part of axonemal radial spoke complexes that play an important part in the motility of sperm and cilia. Important for male fertility. Involved in fibrous sheath integrity and sperm motility, plays a role in PKA-dependent signaling processes required for spermatozoa capacitation. This chain is Ropporin-1-like protein (ropn1l), found in Xenopus laevis (African clawed frog).